A 308-amino-acid chain; its full sequence is 4-diphosphocytidyl-2-C-methyl-D-erythritol kinase (308 aa).

Lys-23 is an active-site residue. Residue 108-118 (PVAAGIGGGSA) participates in ATP binding. Asp-150 is a catalytic residue.

Belongs to the GHMP kinase family. IspE subfamily.

The enzyme catalyses 4-CDP-2-C-methyl-D-erythritol + ATP = 4-CDP-2-C-methyl-D-erythritol 2-phosphate + ADP + H(+). Its pathway is isoprenoid biosynthesis; isopentenyl diphosphate biosynthesis via DXP pathway; isopentenyl diphosphate from 1-deoxy-D-xylulose 5-phosphate: step 3/6. Functionally, catalyzes the phosphorylation of the position 2 hydroxy group of 4-diphosphocytidyl-2C-methyl-D-erythritol. The chain is 4-diphosphocytidyl-2-C-methyl-D-erythritol kinase from Nitrobacter winogradskyi (strain ATCC 25391 / DSM 10237 / CIP 104748 / NCIMB 11846 / Nb-255).